We begin with the raw amino-acid sequence, 1360 residues long: KN motif and ankyrin repeat domains 1 (1360 aa).

Residues 30–68 (PYFVETPYGFQLDLDFVKYVDDIQKGNTIKKLNIQKRRK) form a KN motif; Interaction with TLN1 region. An Important for binding to TLN1 motif is present at residues 41–44 (LDLD). The short motif at 43 to 52 (LDFVKYVDDI) is the Nuclear export signal 1 (NES 1) element. Residues 65–68 (KRRK) carry the Nuclear localization signal 1 (NLS 1) motif. A disordered region spans residues 66 to 103 (RRKPSVPCPEVRAIPGHQGVWTSTESLSSSNSDDSKQC). The span at 88-103 (STESLSSSNSDDSKQC) shows a compositional bias: low complexity. The short motif at 125–134 (LETSPTFAVS) is the Nuclear export signal 2 (NES 2) element. Ser186 carries the post-translational modification Phosphoserine. The segment at 221–253 (DYNSYVPAAPTTSSMGSSVRHSPLSSGISTPVT) is disordered. The span at 230–253 (PTTSSMGSSVRHSPLSSGISTPVT) shows a compositional bias: polar residues. The segment at 244 to 339 (LSSGISTPVT…SQLELLARAR (96 aa)) is interaction with PPFIBP1. Residues 260–311 (LQHIREQMAIALKRLKELEEQVRTIPVLQVKISVLQEEKRQLASQLKSQRAS) are a coiled coil. Ser325 carries the phosphoserine modification. Coiled coils occupy residues 367–394 (FRQL…ELRE) and 453–487 (ITEA…TTHD). The Nuclear export signal 3 (NES 3) signature appears at 618–627 (LTLLKTNLNL). Disordered regions lie at residues 929–954 (SQPE…MQGS) and 983–1053 (IMKK…DTRG). Composition is skewed to basic and acidic residues over residues 938–947 (AEGKHSRGHE) and 985–995 (KKSDGNKDSNG). The short motif at 985-998 (KKSDGNKDSNGAKK) is the Nuclear localization signal 2 (NLS 2) element. A compositionally biased stretch (low complexity) spans 1010–1025 (ETTSSDESSSDGSSSS). Residues 1026 to 1047 (ESDDECDTIGYPPEEEEEEEEK) show a composition bias toward acidic residues. Residues 1081-1360 (EPEKEEIRER…PGPTHRGSFD (280 aa)) are interaction with KIF21A. Residues 1117–1154 (KDMRICLNTLQHDWFRVSSQKSAVPAMVGDYIAAFEAV) form an ANK 0; degenerate repeat. ANK repeat units follow at residues 1169–1199 (NGNT…NVDH), 1203–1236 (AGYT…DVNA), 1241–1270 (AGQT…DVNI), 1274–1306 (EGST…HLED), and 1308–1337 (DGST…FSKA). The tract at residues 1337–1360 (AQSPSTPRLGRKTSPGPTHRGSFD) is disordered.

Part of a cortical microtubule stabilization complex (CMSC) composed of KANK1, PPFIA1, PPFIBP1, ERC1/ELKS, PHLDB2/LL5beta, CLASPs, KIF21A and possibly additional interactors; within CMSCs KANK1 and PHLDB2/LL5beta appear to be the core components for targeting of microtubule-binding proteins KIF21A and CLASPs, whereas PPFIA1, PPFIBP1 and ERC1/ELKS serve as scaffolds for protein clustering. Interacts (via KN motif) with TLN1 (via R7 domain); this mediates CMSC clustering around focal adhesions. Interacts (via CC1 domain, residues 244-339) with PPFIBP1. Interacts (via ANK repeats 1-5) with KIF21A (via residues 1142-1169). Interacts with YWHAQ; the interaction requires KANK1 phosphorylation at Ser-325 and is enhanced by growth factor stimulation. Interacts with YWHAB, YWHAG, YWHAE, YWHAH, YWHAZ and SFN; the interaction requires KANK1 phosphorylation at Ser-325. Interacts with ARFGEF1; however, colocalization cannot be experimentally confirmed. Interacts with BAIAP2. Interacts with CTNNB1. Interacts (via coiled coil domain) with DAAM1 (via coiled coil domain).

Its subcellular location is the cytoplasm. It localises to the cell cortex. It is found in the cell projection. The protein localises to the ruffle membrane. The protein resides in the nucleus. Its function is as follows. Adapter protein that links structural and signaling protein complexes positioned to guide microtubule and actin cytoskeleton dynamics during cell morphogenesis. At focal adhesions (FAs) rims, organizes cortical microtubule stabilizing complexes (CMSCs) and directly interacts with major FA component TLN1, forming macromolecular assemblies positioned to control microtubule-actin crosstalk at the cell edge. Recruits KIF21A in CMSCs at axonal growth cones and regulates axon guidance by suppressing microtubule growth without inducing microtubule disassembly once it reaches the cell cortex. Interacts with ARFGEF1 and participates in establishing microtubule-organizing center (MTOC) orientation and directed cell movement in wound healing. Regulates actin stress fiber formation and cell migration by inhibiting RHOA activation in response to growth factors; this function involves phosphorylation through PI3K/Akt signaling and may depend on the competitive interaction with 14-3-3 adapter proteins to sequester them from active complexes. Inhibits the formation of lamellipodia but not of filopodia; this function may depend on the competitive interaction with BAIAP2 to block its association with activated RAC1. Inhibits fibronectin-mediated cell spreading; this function is partially mediated by BAIAP2. In the nucleus, is involved in beta-catenin-dependent activation of transcription. During cell division, may regulate DAAM1-dependent RHOA activation that signals centrosome maturation and chromosomal segregation. May also be involved in contractile ring formation during cytokinesis. Potential tumor suppressor for renal cell carcinoma. The sequence is that of KN motif and ankyrin repeat domains 1 from Mus musculus (Mouse).